Here is a 513-residue protein sequence, read N- to C-terminus: Xylose import ATP-binding protein XylG (513 aa).

ABC transporter domains are found at residues 5–242 and 259–505; these read LEMK…VGRE and LRIE…LRSE. 37–44 is a binding site for ATP; it reads GENGSGKS.

This sequence belongs to the ABC transporter superfamily. Xylose importer (TC 3.A.1.2.4) family. As to quaternary structure, the complex is composed of two ATP-binding proteins (XylG), two transmembrane proteins (XylH) and a solute-binding protein (XylF).

It is found in the cell inner membrane. It carries out the reaction D-xylose(out) + ATP + H2O = D-xylose(in) + ADP + phosphate + H(+). Its function is as follows. Part of the ABC transporter complex XylFGH involved in xylose import. Responsible for energy coupling to the transport system. The polypeptide is Xylose import ATP-binding protein XylG (Escherichia coli (strain UTI89 / UPEC)).